A 140-amino-acid polypeptide reads, in one-letter code: MPTINQLVRKGREKKVFKSKSPALNKGYNSFKKEQTNVASPQKRGVCTRVGTMTPKKPNSALRKYARVRLTNGIEVTAYIPGIGHNLQEHSVVLIRGGRVKDLRGVRYHIIRGGLDTAGVANRMQGRSKYGAKKPKAAKK.

Position 102 is a 3-methylthioaspartic acid (Asp-102).

Belongs to the universal ribosomal protein uS12 family. As to quaternary structure, part of the 30S ribosomal subunit. Contacts proteins S8 and S17. May interact with IF1 in the 30S initiation complex.

In terms of biological role, with S4 and S5 plays an important role in translational accuracy. Functionally, interacts with and stabilizes bases of the 16S rRNA that are involved in tRNA selection in the A site and with the mRNA backbone. Located at the interface of the 30S and 50S subunits, it traverses the body of the 30S subunit contacting proteins on the other side and probably holding the rRNA structure together. The combined cluster of proteins S8, S12 and S17 appears to hold together the shoulder and platform of the 30S subunit. This chain is Small ribosomal subunit protein uS12, found in Geobacillus stearothermophilus (Bacillus stearothermophilus).